Reading from the N-terminus, the 283-residue chain is Urease accessory protein UreD (283 aa).

It belongs to the UreD family. In terms of assembly, ureD, UreF and UreG form a complex that acts as a GTP-hydrolysis-dependent molecular chaperone, activating the urease apoprotein by helping to assemble the nickel containing metallocenter of UreC. The UreE protein probably delivers the nickel.

It is found in the cytoplasm. Functionally, required for maturation of urease via the functional incorporation of the urease nickel metallocenter. This chain is Urease accessory protein UreD, found in Acaryochloris marina (strain MBIC 11017).